The sequence spans 728 residues: Catalase-peroxidase 2 (728 aa).

Positions 1–20 are disordered; the sequence is MSNEGKCPFNHGKRNGTTNR. Positions 91-214 form a cross-link, tryptophyl-tyrosyl-methioninium (Trp-Tyr) (with M-240); that stretch reads WHSAGTYRTG…LAAVQMGLIY (124 aa). His-92 acts as the Proton acceptor in catalysis. The segment at residues 214-240 is a cross-link (tryptophyl-tyrosyl-methioninium (Tyr-Met) (with W-91)); that stretch reads YVNPEGPNGNPDPLASARDIRETFARM. His-255 contacts heme b. The segment at 335–355 is disordered; it reads AHQWQPKGGAGADSVPDPFEP.

Belongs to the peroxidase family. Peroxidase/catalase subfamily. Homodimer or homotetramer. Heme b serves as cofactor. In terms of processing, formation of the three residue Trp-Tyr-Met cross-link is important for the catalase, but not the peroxidase activity of the enzyme.

It carries out the reaction H2O2 + AH2 = A + 2 H2O. The enzyme catalyses 2 H2O2 = O2 + 2 H2O. In terms of biological role, bifunctional enzyme with both catalase and broad-spectrum peroxidase activity. The sequence is that of Catalase-peroxidase 2 from Burkholderia cenocepacia (strain HI2424).